We begin with the raw amino-acid sequence, 293 residues long: Formamidopyrimidine-DNA glycosylase (293 aa).

Pro-2 acts as the Schiff-base intermediate with DNA in catalysis. The Proton donor role is filled by Glu-3. Lys-58 functions as the Proton donor; for beta-elimination activity in the catalytic mechanism. 3 residues coordinate DNA: His-104, Arg-123, and Lys-166. Residues Gln-257–Arg-293 form an FPG-type zinc finger. Arg-283 serves as the catalytic Proton donor; for delta-elimination activity.

It belongs to the FPG family. In terms of assembly, monomer. Requires Zn(2+) as cofactor.

The catalysed reaction is Hydrolysis of DNA containing ring-opened 7-methylguanine residues, releasing 2,6-diamino-4-hydroxy-5-(N-methyl)formamidopyrimidine.. The enzyme catalyses 2'-deoxyribonucleotide-(2'-deoxyribose 5'-phosphate)-2'-deoxyribonucleotide-DNA = a 3'-end 2'-deoxyribonucleotide-(2,3-dehydro-2,3-deoxyribose 5'-phosphate)-DNA + a 5'-end 5'-phospho-2'-deoxyribonucleoside-DNA + H(+). Functionally, involved in base excision repair of DNA damaged by oxidation or by mutagenic agents. Acts as a DNA glycosylase that recognizes and removes damaged bases. Has a preference for oxidized purines, such as 7,8-dihydro-8-oxoguanine (8-oxoG). Has AP (apurinic/apyrimidinic) lyase activity and introduces nicks in the DNA strand. Cleaves the DNA backbone by beta-delta elimination to generate a single-strand break at the site of the removed base with both 3'- and 5'-phosphates. This is Formamidopyrimidine-DNA glycosylase from Bradyrhizobium sp. (strain ORS 278).